Here is a 642-residue protein sequence, read N- to C-terminus: Cylicin-1 (642 aa).

Disordered regions lie at residues 167–203 (NGEP…NLEY) and 284–607 (NCSQ…CEPF). The span at 191–203 (KTSNSTSETNLEY) shows a compositional bias: polar residues. Tandem repeats lie at residues 294 to 313 (LKTG…GSKD), 314 to 344 (AKKE…DSKD), 345 to 391 (GKKK…KKST), 392 to 432 (GSTG…SSKK), 433 to 464 (SKKD…SEGD), 465 to 500 (STGK…SDLG), 501 to 526 (VNKK…SKAG), and 527 to 543 (RRKN…DSSG). The span at 298–316 (GKKERDSDIDSGGSKDAKK) shows a compositional bias: basic and acidic residues. Positions 317–330 (EGKKKGKRESRKKR) are enriched in basic residues. The span at 353–364 (KKNEIKKKKDTD) shows a compositional bias: basic and acidic residues. Positions 388–404 (KKSTGSTGSESVDSKST) are enriched in low complexity. Basic residues predominate over residues 405-416 (NKVKKQVKKGVM). Residues 428–440 (ASSKKSKKDEKKE) are compositionally biased toward basic and acidic residues. Residues 454-463 (STDADSESEG) are compositionally biased toward acidic residues. Over residues 465 to 488 (STGKKNEKKDKKITKKGEKKDAKK) the composition is skewed to basic and acidic residues. Residues 513–523 (SFSDSTSDSYS) are compositionally biased toward low complexity. An 8 X approximate tandem repeats region spans residues 527 to 543 (RRKNVRRSDSESEDSSG).

In terms of assembly, interacts with proteins of spermatozoa head including ACTL7A, CCIN, FAM209 and SPACA1; the interactions may be necessary for proper acrosome attachment to the nuclear envelope. In terms of tissue distribution, testis.

The protein resides in the cytoplasm. It localises to the cytoskeleton. Its subcellular location is the perinuclear theca. It is found in the calyx. In terms of biological role, plays a role in the establishment of normal sperm morphology during spermatogenesis and is required for acrosome attachment to the nuclear envelope. In Mus musculus (Mouse), this protein is Cylicin-1.